Here is a 1946-residue protein sequence, read N- to C-terminus: Chromodomain-helicase-DNA-binding protein 5 (1946 aa).

3 disordered regions span residues 1-140, 236-272, and 285-340; these read MRGP…SGQL, VPQT…GRGK, and SKRK…GDGY. Acidic residues-rich tracts occupy residues 17-37 and 72-90; these read EEME…EGFE and NDEM…ESEG. Composition is skewed to basic residues over residues 96–118 and 254–272; these read TKKK…KRKK and GVRK…GRGK. Residues 293-303 are compositionally biased toward acidic residues; that stretch reads SEEDEREDSDL. A compositionally biased stretch (basic residues) spans 323 to 332; it reads KKNKRRRKKK. PHD-type zinc fingers lie at residues 345 to 392 and 418 to 465; these read QDYC…CEKE and MEFC…CTCP. Residues 345–655 are histone-binding; sequence QDYCEVCQQG…HRELMLGEDA (311 aa). In terms of domain architecture, Chromo 1 spans 499-556; sequence MPPPRPLEGIPEREFFVKWAGLSYWHCSWVKELQLELYHTVMYRNYQRKNDMDEPPPF. Positions 551 to 573 are disordered; the sequence is DEPPPFDYGSGDEDGKSEKRKNK. Residues 563–573 show a composition bias toward basic and acidic residues; sequence EDGKSEKRKNK. Residues 594 to 655 enclose the Chromo 2 domain; it reads MMVHRILNHS…HRELMLGEDA (62 aa). A Helicase ATP-binding domain is found at 714-898; the sequence is RFSWAQGTDT…FHLLNFLTPE (185 aa). 727 to 734 lines the ATP pocket; sequence DEMGLGKT. The DEAH box motif lies at 849–852; the sequence is DEAH. The Helicase C-terminal domain maps to 1030–1195; sequence LLQKMLKKLR…MTKQELDDIL (166 aa). 5 disordered regions span residues 1210–1254, 1353–1413, 1525–1566, 1579–1696, and 1926–1946; these read MMSQ…VEDS, YNDA…LPPL, KYST…APLG, DEKE…EDKN, and SFPA…LQPF. Residues 1212–1230 show a composition bias toward polar residues; that stretch reads SQGQRPTTPIPDIQSTKGG. Acidic residues-rich tracts occupy residues 1357–1368 and 1378–1387; these read SQEDQEWQDELS and SEDEDEDFEE. Glutamine 1392 carries the post-translational modification N5-methylglutamine. The span at 1551–1564 shows a compositional bias: pro residues; the sequence is TPVPASPAQLPPAP. Serine 1556 is modified (phosphoserine). 3 stretches are compositionally biased toward basic and acidic residues: residues 1602-1629, 1637-1654, and 1661-1676; these read DRVE…EVEK, PLKE…DKPE, and GDFR…KEPG.

This sequence belongs to the SNF2/RAD54 helicase family. Component of the nucleosome remodeling and deacetylase (NuRD) repressor complex, composed of core proteins MTA1, MTA2, MTA3, RBBP4, RBBP7, HDAC1, HDAC2, MBD2, MBD3, and peripherally associated proteins CDK2AP1, CDK2AP2, GATAD2A, GATAD2B, CHD3, CHD4 and CHD5. The exact stoichiometry of the NuRD complex is unknown, and some subunits such as MBD2 and MBD3, GATAD2A and GATAD2B, and CHD3, CHD4 and CHD5 define mutually exclusive NuRD complexes. Interacts with HDAC2. Methylated at Gln-1392 by N6AMT1. As to expression, specifically expressed by neurons in brain, retina and adrenal gland (at protein level). Also detected in testis.

The protein resides in the nucleus. The protein localises to the chromosome. It carries out the reaction ATP + H2O = ADP + phosphate + H(+). Functionally, ATP-dependent chromatin-remodeling factor that binds DNA through histones and regulates gene transcription. May specifically recognize and bind trimethylated 'Lys-27' (H3K27me3) and non-methylated 'Lys-4' of histone H3. Acts as a component of the histone deacetylase NuRD complex which participates in the remodeling of chromatin. Plays a role in the development of the nervous system by activating the expression of genes promoting neuron terminal differentiation. In parallel, it may also positively regulate the trimethylation of histone H3 at 'Lys-27' thereby specifically repressing genes that promote the differentiation into non-neuronal cell lineages. Regulates the expression of genes involved in cell proliferation and differentiation. Downstream activated genes may include CDKN2A that positively regulates the p53/TP53 pathway, which in turn, prevents cell proliferation. In spermatogenesis, it probably regulates histone hyperacetylation and the replacement of histones by transition proteins in chromatin, a crucial step in the condensation of spermatid chromatin and the production of functional spermatozoa. The sequence is that of Chromodomain-helicase-DNA-binding protein 5 (Chd5) from Mus musculus (Mouse).